Consider the following 179-residue polypeptide: SCAN domain-containing protein 1 (179 aa).

The segment at 1–107 (MAATEPILAT…AGSRLGPETF (107 aa)) is disordered. Residues 52–80 (SPNAAVPEAIPTPRAAASAALELPLGPAP) are compositionally biased toward low complexity. Positions 108–166 (RQRFRQFRYQDAAGPREAFRQLRELSRQWLRPDIRTKEQIVEMLVQEQLLAILPEAARA) constitute an SCAN box domain.

Interacts with ZNF202.

The protein resides in the nucleus. Its function is as follows. May regulate transcriptional activity. The sequence is that of SCAN domain-containing protein 1 (SCAND1) from Pan paniscus (Pygmy chimpanzee).